We begin with the raw amino-acid sequence, 204 residues long: Somatotropin (204 aa).

The N-terminal stretch at 1 to 17 (MDRVVLLLSVLSLGVSS) is a signal peptide. Glutamine 18 is modified (pyrrolidone carboxylic acid). Histidine 36 contacts Zn(2+). Cysteine 69 and cysteine 177 are joined by a disulfide. A Zn(2+)-binding site is contributed by glutamate 186. Residues cysteine 194 and cysteine 202 are joined by a disulfide bond.

It belongs to the somatotropin/prolactin family.

It is found in the secreted. Functionally, growth hormone plays an important role in growth control and is involved in the regulation of several anabolic processes. Implicated as an osmoregulatory substance important for seawater adaptation. The polypeptide is Somatotropin (gh) (Lates calcarifer (Barramundi)).